The chain runs to 58 residues: ATP synthase F(0) complex subunit k, mitochondrial (58 aa).

N6-acetyllysine is present on residues lysine 16 and lysine 17. The chain crosses the membrane as a helical span at residues 23 to 45; it reads TLTGRMNCVLATYGGIALLVLYF.

Component of the ATP synthase complex composed at least of ATP5F1A/subunit alpha, ATP5F1B/subunit beta, ATP5MC1/subunit c (homooctomer), MT-ATP6/subunit a, MT-ATP8/subunit 8, ATP5ME/subunit e, ATP5MF/subunit f, ATP5MG/subunit g, ATP5MK/subunit k, ATP5MJ/subunit j, ATP5F1C/subunit gamma, ATP5F1D/subunit delta, ATP5F1E/subunit epsilon, ATP5PF/subunit F6, ATP5PB/subunit b, ATP5PD/subunit d, ATP5PO/subunit OSCP. ATP synthase complex consists of a soluble F(1) head domain (subunits alpha(3) and beta(3)) - the catalytic core - and a membrane F(0) domain - the membrane proton channel (subunits c, a, 8, e, f, g, k and j). These two domains are linked by a central stalk (subunits gamma, delta, and epsilon) rotating inside the F1 region and a stationary peripheral stalk (subunits F6, b, d, and OSCP). The ATP synthase complex/complex V exists as a monomeric and a dimeric supercomplex that helps shape mitochondrial cristae to optimize proton flow.

The protein resides in the mitochondrion membrane. In terms of biological role, subunit k, of the mitochondrial membrane ATP synthase complex (F(1)F(0) ATP synthase or Complex V) that produces ATP from ADP in the presence of a proton gradient across the membrane which is generated by electron transport complexes of the respiratory chain. ATP synthase complex consist of a soluble F(1) head domain - the catalytic core - and a membrane F(1) domain - the membrane proton channel. These two domains are linked by a central stalk rotating inside the F(1) region and a stationary peripheral stalk. During catalysis, ATP synthesis in the catalytic domain of F(1) is coupled via a rotary mechanism of the central stalk subunits to proton translocation. In vivo, can only synthesize ATP although its ATP hydrolase activity can be activated artificially in vitro. Part of the complex F(0) domain. Required for dimerization of the ATP synthase complex and as such regulates ATP synthesis in the mitochondria. The chain is ATP synthase F(0) complex subunit k, mitochondrial from Mus musculus (Mouse).